A 223-amino-acid polypeptide reads, in one-letter code: Endonuclease V (223 aa).

Mg(2+) contacts are provided by Asp35 and Asp103.

This sequence belongs to the endonuclease V family. Requires Mg(2+) as cofactor.

Its subcellular location is the cytoplasm. It carries out the reaction Endonucleolytic cleavage at apurinic or apyrimidinic sites to products with a 5'-phosphate.. DNA repair enzyme involved in the repair of deaminated bases. Selectively cleaves double-stranded DNA at the second phosphodiester bond 3' to a deoxyinosine leaving behind the intact lesion on the nicked DNA. The polypeptide is Endonuclease V (Salmonella schwarzengrund (strain CVM19633)).